A 187-amino-acid chain; its full sequence is Elongation factor P (187 aa).

The protein belongs to the elongation factor P family.

Its subcellular location is the cytoplasm. The protein operates within protein biosynthesis; polypeptide chain elongation. In terms of biological role, involved in peptide bond synthesis. Stimulates efficient translation and peptide-bond synthesis on native or reconstituted 70S ribosomes in vitro. Probably functions indirectly by altering the affinity of the ribosome for aminoacyl-tRNA, thus increasing their reactivity as acceptors for peptidyl transferase. The chain is Elongation factor P from Mycobacterium leprae (strain Br4923).